A 488-amino-acid polypeptide reads, in one-letter code: Glycogen synthase (488 aa).

Arg-20 serves as a coordination point for ADP-alpha-D-glucose.

The protein belongs to the glycosyltransferase 1 family. Bacterial/plant glycogen synthase subfamily.

The catalysed reaction is [(1-&gt;4)-alpha-D-glucosyl](n) + ADP-alpha-D-glucose = [(1-&gt;4)-alpha-D-glucosyl](n+1) + ADP + H(+). Its pathway is glycan biosynthesis; glycogen biosynthesis. Functionally, synthesizes alpha-1,4-glucan chains using ADP-glucose. This chain is Glycogen synthase, found in Chlorobaculum parvum (strain DSM 263 / NCIMB 8327) (Chlorobium vibrioforme subsp. thiosulfatophilum).